Consider the following 577-residue polypeptide: Beta-fructofuranosidase, insoluble isoenzyme 1 (577 aa).

A signal peptide spans 1–22 (MGTRLLALAPWLLLLLLQLAGA). Residue aspartate 63 is part of the active site. N-linked (GlcNAc...) asparagine glycans are attached at residues asparagine 158, asparagine 183, and asparagine 333.

It belongs to the glycosyl hydrolase 32 family. In terms of tissue distribution, expressed in roots, leaves and flowers. Weakly expressed in seeds.

Its subcellular location is the secreted. It is found in the extracellular space. The protein localises to the apoplast. It localises to the cell wall. It carries out the reaction Hydrolysis of terminal non-reducing beta-D-fructofuranoside residues in beta-D-fructofuranosides.. Functionally, may play a role in sucrose partitioning during seed development and in stress response. The protein is Beta-fructofuranosidase, insoluble isoenzyme 1 (CIN1) of Oryza sativa subsp. japonica (Rice).